Consider the following 330-residue polypeptide: Fructose-1,6-bisphosphatase class 1 (330 aa).

The Mg(2+) site is built by glutamate 84, aspartate 103, leucine 105, and aspartate 106. Substrate-binding positions include 106–109 (DGSS), asparagine 196, and lysine 262. Glutamate 268 contacts Mg(2+).

The protein belongs to the FBPase class 1 family. Homotetramer. Mg(2+) serves as cofactor.

It is found in the cytoplasm. It carries out the reaction beta-D-fructose 1,6-bisphosphate + H2O = beta-D-fructose 6-phosphate + phosphate. Its pathway is carbohydrate biosynthesis; gluconeogenesis. This is Fructose-1,6-bisphosphatase class 1 from Shewanella frigidimarina (strain NCIMB 400).